The sequence spans 186 residues: MADQAYEPRLKTEYRERIRKSLKDRFGYSNEMQIPKLEKIVINMGVGEAVADSKKIQSAMADLAKIAGQKPVSTKARTSIAGFKLREGMTVGCKVTLRKDRMYEFLDRLITIALPRVKDFRGLKPTSFDGRGNYAMGLKEHIVFPEINYDQIDQIWGMDIIVTTTAKTDDEARELLKEFQFPFVQQ.

Belongs to the universal ribosomal protein uL5 family. As to quaternary structure, part of the 50S ribosomal subunit; part of the 5S rRNA/L5/L18/L25 subcomplex. Contacts the 5S rRNA and the P site tRNA. Forms a bridge to the 30S subunit in the 70S ribosome.

Functionally, this is one of the proteins that bind and probably mediate the attachment of the 5S RNA into the large ribosomal subunit, where it forms part of the central protuberance. In the 70S ribosome it contacts protein S13 of the 30S subunit (bridge B1b), connecting the 2 subunits; this bridge is implicated in subunit movement. Contacts the P site tRNA; the 5S rRNA and some of its associated proteins might help stabilize positioning of ribosome-bound tRNAs. This chain is Large ribosomal subunit protein uL5, found in Phenylobacterium zucineum (strain HLK1).